Here is a 208-residue protein sequence, read N- to C-terminus: ATP phosphoribosyltransferase (208 aa).

It belongs to the ATP phosphoribosyltransferase family. Short subfamily. As to quaternary structure, heteromultimer composed of HisG and HisZ subunits.

It localises to the cytoplasm. The enzyme catalyses 1-(5-phospho-beta-D-ribosyl)-ATP + diphosphate = 5-phospho-alpha-D-ribose 1-diphosphate + ATP. The protein operates within amino-acid biosynthesis; L-histidine biosynthesis; L-histidine from 5-phospho-alpha-D-ribose 1-diphosphate: step 1/9. In terms of biological role, catalyzes the condensation of ATP and 5-phosphoribose 1-diphosphate to form N'-(5'-phosphoribosyl)-ATP (PR-ATP). Has a crucial role in the pathway because the rate of histidine biosynthesis seems to be controlled primarily by regulation of HisG enzymatic activity. The protein is ATP phosphoribosyltransferase of Hydrogenovibrio crunogenus (strain DSM 25203 / XCL-2) (Thiomicrospira crunogena).